The sequence spans 209 residues: Ribonuclease HII (209 aa).

Residues Gly-18–Arg-209 enclose the RNase H type-2 domain. A divalent metal cation is bound by residues Asp-24, Glu-25, and Asp-116.

The protein belongs to the RNase HII family. It depends on Mn(2+) as a cofactor. Requires Mg(2+) as cofactor.

Its subcellular location is the cytoplasm. It catalyses the reaction Endonucleolytic cleavage to 5'-phosphomonoester.. Its function is as follows. Endonuclease that specifically degrades the RNA of RNA-DNA hybrids. The polypeptide is Ribonuclease HII (Shewanella sp. (strain MR-7)).